The primary structure comprises 596 residues: MSVQEVNTHAVLPPIVSRNDKEFLESIQRYITTETKRVGCKEEGPADEYYTIYRNVFDKFSATDRKIIFQVIDYVSAYKSILTAIKKEYDAFIETIKKGRRTAFYLHGKLKVLAKEPTALVYHQRRAIQLEAKMRIIENNSTAIQLQIDQMKQLRMEYDKKEVKLCAPSRQLWKPIPGMTLQDSVNLEALNKHKQYLEDKYIKLKQDMSTMYVPAQKKAELDEEMVVLLNRRDIAENLKKDRQFRHQRLQVISHTLTPWMKQNMRISFQDVMERIRKTKAIYGYDNIVDEIFEDDPNKKKEAIVMLHYIERFNDLISLGEYERAACFAANSPKRILQNTSTMNKFKAIGKIRGKPLPLLLFFEAIFNTSQAFKRPINADLTMEGIKCGLSEERLDLVTHWVTQEKLTFSEKAGDIIFAYGEQHTYHKPRCLALAQIIYNECGLHRKALLCLCKQGQIHEAMEHIQQSKDINTDDLIQLITACPQIDLIRCLTQERNEKPPFLSFGLAVLHMFSVDMKKVGMRLLQEVSKGEKDVIEHLVMSDLFCSLEKWQEIANICLQNGFKILFNDIMSILRSQAGVSEISEDDTTNIMEHVFW.

Residues 129 to 241 (QLEAKMRIIE…RDIAENLKKD (113 aa)) adopt a coiled-coil conformation.

The polypeptide is Clathrin heavy chain linker domain-containing protein 1 (Clhc1) (Mus musculus (Mouse)).